A 206-amino-acid polypeptide reads, in one-letter code: Sclerostin domain-containing protein 1 (206 aa).

The signal sequence occupies residues 1-23 (MLPPAIHLSLIPLLCILMKNCLA). Residues 42–62 (AHPSSNSTLNQARNGGRHFSS) form a disordered region. The span at 43–62 (HPSSNSTLNQARNGGRHFSS) shows a compositional bias: polar residues. N-linked (GlcNAc...) asparagine glycosylation occurs at Asn47. 4 disulfides stabilise this stretch: Cys75–Cys133, Cys89–Cys147, Cys100–Cys163, and Cys104–Cys165. The 96-residue stretch at 75–170 (CRELRSTKYI…TACKCKRYTR (96 aa)) folds into the CTCK domain. A glycan (N-linked (GlcNAc...) asparagine) is linked at Asn173. Residues 176 to 206 (SHNFESVSPAKPAQHHRERKRASKSSKHSLS) are disordered. A compositionally biased stretch (basic residues) spans 188–206 (AQHHRERKRASKSSKHSLS).

This sequence belongs to the sclerostin family. In terms of assembly, interacts with BMP2, BMP4, BMP6 and BMP7 with high affinity. Highly expressed within the maximally sensitized/receptive endometrium. Weakly expressed in brain, kidney and the female reproductive tract. Expressed in the dermal papilla (DP) and at high level in the precortex of both anagen vibrissae and pelage follicles. Dynymic expression during the hair cycle.

It is found in the secreted. Directly antagonizes activity of BMP2, BMP4, BMP6 and BMP7 in a dose-dependent manner. May be involved in the onset of endometrial receptivity for implantation/sensitization for the decidual cell reaction. Enhances Wnt signaling and inhibits TGF-beta signaling. The polypeptide is Sclerostin domain-containing protein 1 (Sostdc1) (Rattus norvegicus (Rat)).